Reading from the N-terminus, the 522-residue chain is Glucose-1-phosphate adenylyltransferase large subunit 1, chloroplastic (522 aa).

The N-terminal 54 residues, 1-54 (MVVSADCRISLSAPSCIRSSSTGLTRHIKLGSFCNGELMGKKLNLSQLPNIRLR), are a transit peptide targeting the chloroplast. Serine 428 bears the Phosphoserine mark.

It belongs to the bacterial/plant glucose-1-phosphate adenylyltransferase family. As to quaternary structure, heterotetramer. Leaves.

It localises to the plastid. Its subcellular location is the chloroplast. It carries out the reaction alpha-D-glucose 1-phosphate + ATP + H(+) = ADP-alpha-D-glucose + diphosphate. The protein operates within glycan biosynthesis; starch biosynthesis. Activated by 3'phosphoglycerate, inhibited by orthophosphate. Allosteric regulation. This protein plays a role in synthesis of starch. It catalyzes the synthesis of the activated glycosyl donor, ADP-glucose from Glc-1-P and ATP. This chain is Glucose-1-phosphate adenylyltransferase large subunit 1, chloroplastic (ADG2), found in Arabidopsis thaliana (Mouse-ear cress).